The following is an 86-amino-acid chain: Putative defensin-like protein 234 (86 aa).

An N-terminal signal peptide occupies residues 1–26; it reads MRSATLLLVSCVLLSFILGNVKEVEA. 4 disulfides stabilise this stretch: Cys-34–Cys-86, Cys-44–Cys-71, Cys-52–Cys-80, and Cys-69–Cys-82.

It belongs to the DEFL family.

It is found in the secreted. This is Putative defensin-like protein 234 (SCRL14) from Arabidopsis thaliana (Mouse-ear cress).